The following is a 151-amino-acid chain: Macrodomain Ter protein (151 aa).

This sequence belongs to the MatP family. In terms of assembly, homodimer.

It localises to the cytoplasm. Functionally, required for spatial organization of the terminus region of the chromosome (Ter macrodomain) during the cell cycle. Prevents early segregation of duplicated Ter macrodomains during cell division. Binds specifically to matS, which is a 13 bp signature motif repeated within the Ter macrodomain. The chain is Macrodomain Ter protein from Photorhabdus laumondii subsp. laumondii (strain DSM 15139 / CIP 105565 / TT01) (Photorhabdus luminescens subsp. laumondii).